A 241-amino-acid polypeptide reads, in one-letter code: MAGPSTTSNAPKQRKRVEAETSSNTSTTLRRAKDGSAFALCEGCNKSVAVALISMHNCSLDAKIRVNLEAQVVETQAEAKKKPAEKKKTTSDGPKPKRLKKTNDEKKSSSTSNKPKRPLTAFFIFMSDFRKTFKSEHNGSLAKDAAKIGGEKWKSLTEEEKKVYLDKAAELKAEYNKSLESNDADEEEEDEEKQSDDVDDAEEKQVDDDDEVEEKEVENTDDDKKEAEGKEEEEEEILDDY.

Composition is skewed to polar residues over residues 1–11 (MAGPSTTSNAP) and 20–29 (ETSSNTSTTL). Disordered stretches follow at residues 1 to 30 (MAGP…TTLR), 75 to 116 (TQAE…NKPK), and 174 to 241 (EYNK…LDDY). The span at 77-90 (AEAKKKPAEKKKTT) shows a compositional bias: basic and acidic residues. Positions 115–183 (PKRPLTAFFI…EYNKSLESND (69 aa)) form a DNA-binding region, HMG box. 2 stretches are compositionally biased toward acidic residues: residues 182 to 221 (NDAD…ENTD) and 229 to 241 (GKEE…LDDY).

This sequence belongs to the HMGB family. In terms of processing, phosphorylated. Expressed at low levels in lateral roots, root tips, cotyledons, leaves and flowers (including pedicels, but excluding styles).

The protein resides in the nucleus. Binds preferentially double-stranded supercoiled DNA. Required for karyogamy during female gametophyte development, when the two polar nuclei fuse to form the diploid central cell nucleus. This is High mobility group B protein 7 (HMGB7) from Arabidopsis thaliana (Mouse-ear cress).